We begin with the raw amino-acid sequence, 860 residues long: Semaphorin-3aa (860 aa).

Positions Met1–Pro17 are cleaved as a signal peptide. In terms of domain architecture, Sema spans Arg31 to Leu515. An N-linked (GlcNAc...) asparagine glycan is attached at Asn53. Cys104 and Cys115 are disulfide-bonded. A glycan (N-linked (GlcNAc...) asparagine) is linked at Asn126. 4 cysteine pairs are disulfide-bonded: Cys133–Cys142, Cys270–Cys382, Cys294–Cys342, and Cys518–Cys536. The region spanning Gly579–Leu668 is the Ig-like C2-type domain. N-linked (GlcNAc...) asparagine glycosylation is present at Asn593. A disulfide bridge links Cys652 with Cys717. Positions Lys725–Val860 are disordered. Composition is skewed to polar residues over residues Thr748–Gln764 and Thr782–Gln818. A compositionally biased stretch (basic and acidic residues) spans Gln838–Val860.

This sequence belongs to the semaphorin family.

Its subcellular location is the secreted. In terms of biological role, may influence outgrowth by a variety of growth cones including those of the posterior lateral line ganglion. The sequence is that of Semaphorin-3aa (sema3aa) from Danio rerio (Zebrafish).